Here is a 223-residue protein sequence, read N- to C-terminus: Probable amino-acid ABC transporter permease protein PatM (223 aa).

Residues 19–210 (LGTTMEMATW…GVVVILTRVQ (192 aa)) form the ABC transmembrane type-1 domain. The next 5 helical transmembrane spans lie at 23–43 (MEMATWGLVFSLILSVILANI), 59–78 (ISFFRGTPLLVQLFLLYYGL), 90–110 (AFSAAVIGLTLHFAAYMAESI), 156–176 (FIDMIKSTSLAFTLGVAEIMA), and 186–206 (FRFFEAFLAVALIYWGVVVIL).

This sequence belongs to the binding-protein-dependent transport system permease family. HisMQ subfamily.

It localises to the cell inner membrane. Probably part of a binding-protein-dependent transport system for an amino acid. Probably responsible for the translocation of the substrate across the membrane. In Vibrio harveyi (Beneckea harveyi), this protein is Probable amino-acid ABC transporter permease protein PatM (patM).